A 168-amino-acid chain; its full sequence is Protein-export protein SecB (168 aa).

This sequence belongs to the SecB family. Homotetramer, a dimer of dimers. One homotetramer interacts with 1 SecA dimer.

The protein resides in the cytoplasm. Its function is as follows. One of the proteins required for the normal export of preproteins out of the cell cytoplasm. It is a molecular chaperone that binds to a subset of precursor proteins, maintaining them in a translocation-competent state. It also specifically binds to its receptor SecA. This is Protein-export protein SecB from Glaesserella parasuis serovar 5 (strain SH0165) (Haemophilus parasuis).